Reading from the N-terminus, the 378-residue chain is REST corepressor 3 (378 aa).

One can recognise an ELM2 domain in the interval 1 to 83 (MRVGAEYQAR…KSLADLPNFT (83 aa)). An SANT domain is found at 84–135 (PFPDEWTVEDKVLFEQAFSFHGKSFHRIQQMLPDKTIASLVKYYYSWKKTRS). The segment at 147-219 (LANRNNQGDS…SQRSKCRPPK (73 aa)) is disordered. The span at 162–184 (EPHPMDGNDSDYDPKKEAKKEGN) shows a compositional bias: basic and acidic residues. The span at 205-217 (QHRHHSQRSKCRP) shows a compositional bias: basic residues. Residues 238–273 (ANTILRRLDMELISLKRQVQNAKQVNSALKQKMEGG) are a coiled coil. The disordered stretch occupies residues 337-356 (TASSTSCCSCSPPSASAAPT).

Belongs to the CoREST family.

The protein resides in the nucleus. Its function is as follows. May act as a component of a corepressor complex that represses transcription. This is REST corepressor 3 (RCOR3) from Gallus gallus (Chicken).